Here is a 364-residue protein sequence, read N- to C-terminus: S-adenosylmethionine:tRNA ribosyltransferase-isomerase (364 aa).

Belongs to the QueA family. In terms of assembly, monomer.

It is found in the cytoplasm. The enzyme catalyses 7-aminomethyl-7-carbaguanosine(34) in tRNA + S-adenosyl-L-methionine = epoxyqueuosine(34) in tRNA + adenine + L-methionine + 2 H(+). It participates in tRNA modification; tRNA-queuosine biosynthesis. Transfers and isomerizes the ribose moiety from AdoMet to the 7-aminomethyl group of 7-deazaguanine (preQ1-tRNA) to give epoxyqueuosine (oQ-tRNA). The sequence is that of S-adenosylmethionine:tRNA ribosyltransferase-isomerase from Bradyrhizobium sp. (strain BTAi1 / ATCC BAA-1182).